The sequence spans 177 residues: MAKRKEEVFNWEDEEQEEIIWVSKSEIKRDAEALKKLGEKLVNLTKTNLDKIPLDTGLRDAVELAQRLQKEALRRQIQYIGKLLRAIDPEPIQEALNKIENKHQQQQAKLHKLELLRDELVQKGNSAFTELLIQYPHADRQHLHNLIRSAQKEREQNKPPKSYREIFQYLKDLILED.

This sequence belongs to the DarP family.

The protein localises to the cytoplasm. Functionally, member of a network of 50S ribosomal subunit biogenesis factors which assembles along the 30S-50S interface, preventing incorrect 23S rRNA structures from forming. Promotes peptidyl transferase center (PTC) maturation. This Histophilus somni (strain 129Pt) (Haemophilus somnus) protein is Dual-action ribosomal maturation protein DarP.